A 299-amino-acid chain; its full sequence is Protoheme IX farnesyltransferase 1 (299 aa).

9 helical membrane passes run 25–45, 47–67, 95–115, 119–139, 147–167, 173–193, 217–237, 243–263, and 279–299; these read VVVL…RAGV, WSVL…AAVV, LPAL…LLAF, LTAW…TGFL, IVIG…AVSG, PLLL…ALAI, ALHI…PYAI, LYLA…WVLY, and IGYL…LLNL.

This sequence belongs to the UbiA prenyltransferase family. Protoheme IX farnesyltransferase subfamily.

It localises to the cell inner membrane. The enzyme catalyses heme b + (2E,6E)-farnesyl diphosphate + H2O = Fe(II)-heme o + diphosphate. It functions in the pathway porphyrin-containing compound metabolism; heme O biosynthesis; heme O from protoheme: step 1/1. Functionally, converts heme B (protoheme IX) to heme O by substitution of the vinyl group on carbon 2 of heme B porphyrin ring with a hydroxyethyl farnesyl side group. In Pseudomonas entomophila (strain L48), this protein is Protoheme IX farnesyltransferase 1.